The primary structure comprises 481 residues: MEWETIIGLEVHVQLATNTKIFSGSSTAFGAEPNTQACAIDLAMPGTLPTPNAEAFRFATMFGLAVNAEIGKRSVFERKNYFYPDLPKGYQTTQLAEPIVGPGYVDIQLADGSEKRVRIHHAHLEEDAGKSLHEDFHGMSGIDLNRAGTPLIEVVTEPDMRSAEEAVAFARKLHSIVTSLGICDGEMSQGSMRFDVNISVRLKGDEKLGTRTETKNLNSFRFMERCIEQEVERQIEVIEDGGKIIQETRLYDGETHKARSMRSKEEANDYRYFPCPDLLPVMLDDDFIDAARAAMPELPDARQLRFEESYGLSPYDAGIISADAATADFFEAVAAKCSDAKLAANWVMGEISARLNAEEIRITAAKVSAEQLAGLIARIKDQTISNKIAKQVFDAMWNGEGDADTIIEAKGLKQVSDSGALEKMVDDVMNANPAQVENYRKADPAKQPKMLGFFVGQVMKASKGQANPQQLNDILKKKLEN.

It belongs to the GatB/GatE family. GatB subfamily. As to quaternary structure, heterotrimer of A, B and C subunits.

The catalysed reaction is L-glutamyl-tRNA(Gln) + L-glutamine + ATP + H2O = L-glutaminyl-tRNA(Gln) + L-glutamate + ADP + phosphate + H(+). The enzyme catalyses L-aspartyl-tRNA(Asn) + L-glutamine + ATP + H2O = L-asparaginyl-tRNA(Asn) + L-glutamate + ADP + phosphate + 2 H(+). In terms of biological role, allows the formation of correctly charged Asn-tRNA(Asn) or Gln-tRNA(Gln) through the transamidation of misacylated Asp-tRNA(Asn) or Glu-tRNA(Gln) in organisms which lack either or both of asparaginyl-tRNA or glutaminyl-tRNA synthetases. The reaction takes place in the presence of glutamine and ATP through an activated phospho-Asp-tRNA(Asn) or phospho-Glu-tRNA(Gln). In Teredinibacter turnerae (strain ATCC 39867 / T7901), this protein is Aspartyl/glutamyl-tRNA(Asn/Gln) amidotransferase subunit B.